Consider the following 334-residue polypeptide: Serpentine receptor class alpha-11 (334 aa).

Over 1 to 23 (MTTNNPVCASDAHMEMYSSKLYT) the chain is Extracellular. A helical transmembrane segment spans residues 24–44 (SALFLNLIIATTSMILTGFAI). Residues 45–57 (QKLFMESIINIST) lie on the Cytoplasmic side of the membrane. The helical transmembrane segment at 58–80 (RMFLFCGLMCCSLHQTAYIVLRI) threads the bilayer. Topologically, residues 81–105 (QVIYQVFFKLSEPCNLYYPAIDCKY) are extracellular. Residues 106-126 (VTFSLVAGNTGMIFIQSAMTI) traverse the membrane as a helical segment. At 127-145 (DRIFATIFPKLWPKLKYWP) the chain is on the cytoplasmic side. Residues 146-166 (GVVLSILMIACNYANVQIIFW) form a helical membrane-spanning segment. Over 167–191 (GDPLTEYVPTCGQFPSKSVNRFQTF) the chain is Extracellular. The chain crosses the membrane as a helical span at residues 192 to 212 (LAIALYMSIAHMVINVIILYI). The Cytoplasmic portion of the chain corresponds to 213-239 (NVLQDRQQSKSFNVNQRYQSREALKSS). A helical transmembrane segment spans residues 240-260 (QAIFFLSMSQFFACLIYSVFT). The Extracellular portion of the chain corresponds to 261 to 277 (KVFLEFQLNLSPLQSGL). The chain crosses the membrane as a helical span at residues 278-298 (VLALSYTTPYACIAIPSLIIF). Residues 299-334 (TFRFIKNQRLRNINELRSQTETGDECMRKIAKIWEK) lie on the Cytoplasmic side of the membrane.

This sequence belongs to the nematode receptor-like protein sra family. Expressed in interneurons AIY and AVB in L1 larvae. In adults, strong expression is seen in AIY and AIA but only weak expression in AVB.

It localises to the membrane. A G protein-coupled receptor required for olfactory imprinting a requisite in ordorant response such as benzaldehyde and isoamylalcohol. The chain is Serpentine receptor class alpha-11 (sra-11) from Caenorhabditis elegans.